The primary structure comprises 488 residues: Transmembrane protein 39A (488 aa).

Asn31 and Asn39 each carry an N-linked (GlcNAc...) asparagine glycan. The next 3 membrane-spanning stretches (helical) occupy residues Gly72–Ile92, Thr110–Ala130, and Leu155–Val175. Asn180 is a glycosylation site (N-linked (GlcNAc...) asparagine). A run of 5 helical transmembrane segments spans residues Ser182–Phe202, Glu287–Val307, Cys319–Pro339, Leu420–Leu440, and Asn446–Leu466.

The protein belongs to the TMEM39 family.

The protein resides in the endoplasmic reticulum membrane. Regulates autophagy by controlling the spatial distribution and levels of the intracellular phosphatidylinositol 4-phosphate (PtdIns(4)P) pools. Modulates (PtdIns(4)P) levels by regulating the ER-to-Golgi trafficking of the phosphatidylinositide phosphatase SACM1L. This Xenopus tropicalis (Western clawed frog) protein is Transmembrane protein 39A (tmem39a).